The primary structure comprises 138 residues: Protein A2-A3 (138 aa).

This sequence belongs to the T5likevirus A2 protein family. Interacts with A1 protein; the two proteins form heterooligomers.

Its function is as follows. Involved, together with A1 protein, in the second step transfer (SST) which allows the completion of viral DNA into the host cell. In Escherichia coli (Enterobacteria phage BF23), this protein is Protein A2-A3 (A2-A3).